The sequence spans 146 residues: ATP synthase epsilon chain 2 (146 aa).

It belongs to the ATPase epsilon chain family. As to quaternary structure, F-type ATPases have 2 components, CF(1) - the catalytic core - and CF(0) - the membrane proton channel. CF(1) has five subunits: alpha(3), beta(3), gamma(1), delta(1), epsilon(1). CF(0) has three main subunits: a, b and c.

The protein localises to the cell inner membrane. Functionally, produces ATP from ADP in the presence of a proton gradient across the membrane. This Cereibacter sphaeroides (strain ATCC 17023 / DSM 158 / JCM 6121 / CCUG 31486 / LMG 2827 / NBRC 12203 / NCIMB 8253 / ATH 2.4.1.) (Rhodobacter sphaeroides) protein is ATP synthase epsilon chain 2.